A 366-amino-acid polypeptide reads, in one-letter code: UDP-N-acetylenolpyruvoylglucosamine reductase (366 aa).

Residues 27 to 197 (LGGPAAGFVV…LRVRFLLRDG (171 aa)) enclose the FAD-binding PCMH-type domain. Arg-175 is a catalytic residue. Ser-252 functions as the Proton donor in the catalytic mechanism. Residue Glu-358 is part of the active site.

It belongs to the MurB family. FAD serves as cofactor.

Its subcellular location is the cytoplasm. It carries out the reaction UDP-N-acetyl-alpha-D-muramate + NADP(+) = UDP-N-acetyl-3-O-(1-carboxyvinyl)-alpha-D-glucosamine + NADPH + H(+). Its pathway is cell wall biogenesis; peptidoglycan biosynthesis. In terms of biological role, cell wall formation. The sequence is that of UDP-N-acetylenolpyruvoylglucosamine reductase from Saccharopolyspora erythraea (strain ATCC 11635 / DSM 40517 / JCM 4748 / NBRC 13426 / NCIMB 8594 / NRRL 2338).